The following is a 775-amino-acid chain: Major facilitator superfamily domain-containing protein 6 (775 aa).

T11 carries the phosphothreonine modification. Positions 28-47 (NGICREPEPPSNETPSSTET) are disordered. Low complexity predominate over residues 38–47 (SNETPSSTET). 12 consecutive transmembrane segments (helical) span residues 74-94 (VFYF…PVYY), 106-126 (LLVG…GVVA), 133-153 (KIVL…IGFV), 289-309 (AIFL…ASSV), 338-358 (WGLA…DVLI), 372-392 (QIVF…ATQF), 453-473 (VLFV…FLYW), 482-502 (TTLF…AYFF), 510-530 (IGHI…YIYI), 547-567 (GVTH…AVPP), 582-602 (LGLG…YFGA), and 608-628 (GIGM…WLAV).

Belongs to the major facilitator superfamily. MFSD6 family.

The protein localises to the membrane. Functionally, MHC class I receptor. Binds only to H-2 class I histocompatibility antigen, K-D alpha chain (H-2K(D)). The sequence is that of Major facilitator superfamily domain-containing protein 6 (Mfsd6) from Mus musculus (Mouse).